The chain runs to 402 residues: Multidrug resistance protein MdtH (402 aa).

10 helical membrane passes run Tyr13–Ile33, Ser34–Leu54, Pro99–Phe116, Leu139–Leu159, Tyr165–Leu185, Val214–Met234, Ala244–Ala264, Leu277–Leu297, Leu340–Gly360, and Leu368–Phe388.

It belongs to the major facilitator superfamily. DHA1 family. MdtH (TC 2.A.1.2.21) subfamily.

The protein resides in the cell inner membrane. This chain is Multidrug resistance protein MdtH, found in Edwardsiella ictaluri (strain 93-146).